The primary structure comprises 761 residues: Semaphorin-3D (761 aa).

An N-terminal signal peptide occupies residues 1–24 (MRASQVPNACSLLSLAMLFFPVTG). A Sema domain is found at 32-519 (RLKLSYKDLL…SRDGLVQLSL (488 aa)). A disulfide bridge connects residues C105 and C116. A glycan (N-linked (GlcNAc...) asparagine) is linked at N127. 4 cysteine pairs are disulfide-bonded: C134–C143, C274–C386, C298–C346, and C522–C540. In terms of domain architecture, Ig-like C2-type spans 552–670 (PTSKRRARRQ…IHTIVKLNLN (119 aa)). A glycan (N-linked (GlcNAc...) asparagine) is linked at N595. C653 and C719 are joined by a disulfide. Residues 728 to 754 (RRQRNKGGAKWKHVQEMKKKRNRRHHE) are compositionally biased toward basic residues. Residues 728–761 (RRQRNKGGAKWKHVQEMKKKRNRRHHEPARPPST) are disordered.

Belongs to the semaphorin family. Developing spinal cord and developing visual system. Collapsin-1, -2, -3, and -5 bind to overlapping but distinct axon tracts.

It is found in the secreted. Its function is as follows. Induces the collapse and paralysis of neuronal growth cones. Could potentially act as repulsive cues toward specific neuronal populations. Binds to neuropilin. The chain is Semaphorin-3D (SEMA3D) from Gallus gallus (Chicken).